A 296-amino-acid chain; its full sequence is MFS-type transporter pytF (296 aa).

The next 7 helical transmembrane spans lie at 30 to 50, 72 to 92, 98 to 118, 124 to 144, 157 to 177, 180 to 200, and 238 to 258; these read WLVV…LNSF, WIGS…GPVF, KVLF…VSLC, FILA…YPTI, LAMG…PLIL, LFAV…SFAL, and VVGM…IPLF. Residue N265 is glycosylated (N-linked (GlcNAc...) asparagine). A helical membrane pass occupies residues 271–291; it reads SLISILNAGSFVGRIVSGALA.

This sequence belongs to the major facilitator superfamily. Monocarboxylate porter (TC 2.A.1.13) family.

The protein resides in the cell membrane. Its function is as follows. MFS-type transporter; part of the gene cluster that mediates the biosynthesis of pyranterreones, a family of antioxidative compounds. Directly involved in the secretion of pyranterreones. This chain is MFS-type transporter pytF, found in Aspergillus terreus (strain NIH 2624 / FGSC A1156).